Reading from the N-terminus, the 226-residue chain is Biosynthetic peptidoglycan transglycosylase (226 aa).

A helical transmembrane segment spans residues 10-30; it reads IIMTLLALLILPYLLIPVYAL.

The protein belongs to the glycosyltransferase 51 family.

The protein localises to the cell inner membrane. It carries out the reaction [GlcNAc-(1-&gt;4)-Mur2Ac(oyl-L-Ala-gamma-D-Glu-L-Lys-D-Ala-D-Ala)](n)-di-trans,octa-cis-undecaprenyl diphosphate + beta-D-GlcNAc-(1-&gt;4)-Mur2Ac(oyl-L-Ala-gamma-D-Glu-L-Lys-D-Ala-D-Ala)-di-trans,octa-cis-undecaprenyl diphosphate = [GlcNAc-(1-&gt;4)-Mur2Ac(oyl-L-Ala-gamma-D-Glu-L-Lys-D-Ala-D-Ala)](n+1)-di-trans,octa-cis-undecaprenyl diphosphate + di-trans,octa-cis-undecaprenyl diphosphate + H(+). It functions in the pathway cell wall biogenesis; peptidoglycan biosynthesis. Its function is as follows. Peptidoglycan polymerase that catalyzes glycan chain elongation from lipid-linked precursors. The sequence is that of Biosynthetic peptidoglycan transglycosylase from Agrobacterium fabrum (strain C58 / ATCC 33970) (Agrobacterium tumefaciens (strain C58)).